A 420-amino-acid polypeptide reads, in one-letter code: 4-hydroxy-3-methylbut-2-en-1-yl diphosphate synthase (flavodoxin) (420 aa).

[4Fe-4S] cluster contacts are provided by Cys307, Cys310, Cys353, and Glu360.

It belongs to the IspG family. Requires [4Fe-4S] cluster as cofactor.

It catalyses the reaction (2E)-4-hydroxy-3-methylbut-2-enyl diphosphate + oxidized [flavodoxin] + H2O + 2 H(+) = 2-C-methyl-D-erythritol 2,4-cyclic diphosphate + reduced [flavodoxin]. It functions in the pathway isoprenoid biosynthesis; isopentenyl diphosphate biosynthesis via DXP pathway; isopentenyl diphosphate from 1-deoxy-D-xylulose 5-phosphate: step 5/6. Functionally, converts 2C-methyl-D-erythritol 2,4-cyclodiphosphate (ME-2,4cPP) into 1-hydroxy-2-methyl-2-(E)-butenyl 4-diphosphate. The protein is 4-hydroxy-3-methylbut-2-en-1-yl diphosphate synthase (flavodoxin) of Brucella suis biovar 1 (strain 1330).